The primary structure comprises 301 residues: Acetyl-coenzyme A carboxylase carboxyl transferase subunit beta (301 aa).

A CoA carboxyltransferase N-terminal domain is found at 25-294; sequence LWIKCPETGE…SAANDMNGGA (270 aa).

It belongs to the AccD/PCCB family. Acetyl-CoA carboxylase is a heterohexamer composed of biotin carboxyl carrier protein (AccB), biotin carboxylase (AccC) and two subunits each of ACCase subunit alpha (AccA) and ACCase subunit beta (AccD).

The protein resides in the cytoplasm. It carries out the reaction N(6)-carboxybiotinyl-L-lysyl-[protein] + acetyl-CoA = N(6)-biotinyl-L-lysyl-[protein] + malonyl-CoA. It functions in the pathway lipid metabolism; malonyl-CoA biosynthesis; malonyl-CoA from acetyl-CoA: step 1/1. Functionally, component of the acetyl coenzyme A carboxylase (ACC) complex. Biotin carboxylase (BC) catalyzes the carboxylation of biotin on its carrier protein (BCCP) and then the CO(2) group is transferred by the transcarboxylase to acetyl-CoA to form malonyl-CoA. This chain is Acetyl-coenzyme A carboxylase carboxyl transferase subunit beta, found in Rhizobium etli (strain CIAT 652).